The following is a 761-amino-acid chain: Phosphoribosylformylglycinamidine synthase subunit PurL (761 aa).

The active site involves His58. Residues Tyr61 and Lys105 each contribute to the ATP site. Mg(2+) is bound at residue Glu107. Substrate contacts are provided by residues Ser108 to His111 and Arg130. The Proton acceptor role is filled by His109. Residue Asp131 coordinates Mg(2+). Gln259 provides a ligand contact to substrate. Asp287 is a binding site for Mg(2+). Glu331–Gln333 provides a ligand contact to substrate. The ATP site is built by Asn519 and Gly556. Residue Asn557 coordinates Mg(2+). Ser559 contacts substrate.

It belongs to the FGAMS family. As to quaternary structure, monomer. Part of the FGAM synthase complex composed of 1 PurL, 1 PurQ and 2 PurS subunits.

Its subcellular location is the cytoplasm. It carries out the reaction N(2)-formyl-N(1)-(5-phospho-beta-D-ribosyl)glycinamide + L-glutamine + ATP + H2O = 2-formamido-N(1)-(5-O-phospho-beta-D-ribosyl)acetamidine + L-glutamate + ADP + phosphate + H(+). The protein operates within purine metabolism; IMP biosynthesis via de novo pathway; 5-amino-1-(5-phospho-D-ribosyl)imidazole from N(2)-formyl-N(1)-(5-phospho-D-ribosyl)glycinamide: step 1/2. Functionally, part of the phosphoribosylformylglycinamidine synthase complex involved in the purines biosynthetic pathway. Catalyzes the ATP-dependent conversion of formylglycinamide ribonucleotide (FGAR) and glutamine to yield formylglycinamidine ribonucleotide (FGAM) and glutamate. The FGAM synthase complex is composed of three subunits. PurQ produces an ammonia molecule by converting glutamine to glutamate. PurL transfers the ammonia molecule to FGAR to form FGAM in an ATP-dependent manner. PurS interacts with PurQ and PurL and is thought to assist in the transfer of the ammonia molecule from PurQ to PurL. The sequence is that of Phosphoribosylformylglycinamidine synthase subunit PurL from Rhodococcus jostii (strain RHA1).